The chain runs to 114 residues: Nucleoid-associated protein THEYE_A1069 (114 aa).

This sequence belongs to the YbaB/EbfC family. As to quaternary structure, homodimer.

It is found in the cytoplasm. The protein localises to the nucleoid. Functionally, binds to DNA and alters its conformation. May be involved in regulation of gene expression, nucleoid organization and DNA protection. The protein is Nucleoid-associated protein THEYE_A1069 of Thermodesulfovibrio yellowstonii (strain ATCC 51303 / DSM 11347 / YP87).